We begin with the raw amino-acid sequence, 2492 residues long: Polyketide synthase 19 (2492 aa).

The Ketosynthase family 3 (KS3) domain occupies 12-463; the sequence is REPIAIVGTS…GTNAHAIVES (452 aa). Residues cysteine 202, histidine 341, and histidine 383 each act as for beta-ketoacyl synthase activity in the active site. Residues 571–866 are malonyl-CoA:ACP transacylase (MAT) domain; the sequence is VFTGQGAQWA…LEVGPHPALK (296 aa). Residues 967 to 1110 form an N-terminal hotdog fold region; that stretch reads HELLGRSVSH…GRIRLWLEQP (144 aa). The interval 967 to 1270 is dehydratase (DH) domain; the sequence is HELLGRSVSH…GVQMTAIGKP (304 aa). The PKS/mFAS DH domain maps to 967–1273; the sequence is HELLGRSVSH…MTAIGKPPDR (307 aa). The Proton acceptor; for dehydratase activity role is filled by histidine 1001. Residues 1125-1273 are C-terminal hotdog fold; the sequence is MSELNMAQVY…MTAIGKPPDR (149 aa). Aspartate 1183 (proton donor; for dehydratase activity) is an active-site residue. Positions 1431–1604 are C-methyltransferase (CMeT) domain; that stretch reads LGAIVKQLGH…KTTGFSGVDI (174 aa). The segment at 2118 to 2293 is ketoreductase (KR) domain; it reads SYLLFGMTGD…AGSIVHISVL (176 aa). Positions 2404–2479 constitute a Carrier domain; that stretch reads PILEKRFAQA…RVCDDVLVDW (76 aa). Position 2438 is an O-(pantetheine 4'-phosphoryl)serine (serine 2438).

In terms of biological role, highly reducing polyketide synthase; part of the gene cluster that mediates the biosynthesis of fujikurins A-D, secondary metabolites playing a role during rice infection. The polyketide synthase PKS19 acts with the trans-enoyl reductase FFUJ_12240 and the polyketide transferase FFUJ_12241 to produce fujikurins, however, the biosynthesis pathway has not been identified yet. The polypeptide is Polyketide synthase 19 (Gibberella fujikuroi (strain CBS 195.34 / IMI 58289 / NRRL A-6831) (Bakanae and foot rot disease fungus)).